The sequence spans 667 residues: DNA ligase (667 aa).

Residues 32-36 (DSEYD), 81-82 (SL), and E110 each bind NAD(+). K112 acts as the N6-AMP-lysine intermediate in catalysis. Residues R133, E167, K283, and K307 each contribute to the NAD(+) site. Residues C401, C404, C419, and C424 each coordinate Zn(2+). In terms of domain architecture, BRCT spans 586–667 (EGHPEFSGKT…FVDKQNELNS (82 aa)).

Belongs to the NAD-dependent DNA ligase family. LigA subfamily. Mg(2+) is required as a cofactor. Mn(2+) serves as cofactor.

The catalysed reaction is NAD(+) + (deoxyribonucleotide)n-3'-hydroxyl + 5'-phospho-(deoxyribonucleotide)m = (deoxyribonucleotide)n+m + AMP + beta-nicotinamide D-nucleotide.. In terms of biological role, DNA ligase that catalyzes the formation of phosphodiester linkages between 5'-phosphoryl and 3'-hydroxyl groups in double-stranded DNA using NAD as a coenzyme and as the energy source for the reaction. It is essential for DNA replication and repair of damaged DNA. In Staphylococcus aureus (strain USA300), this protein is DNA ligase.